The sequence spans 354 residues: Fructose-bisphosphate aldolase (354 aa).

Serine 61 is a D-glyceraldehyde 3-phosphate binding site. Aspartate 104 serves as the catalytic Proton donor. Residues histidine 105, aspartate 139, glutamate 169, and histidine 221 each coordinate Zn(2+). Position 222 (glycine 222) interacts with dihydroxyacetone phosphate. Histidine 260 is a binding site for Zn(2+). Residues 261 to 263 and 282 to 285 each bind dihydroxyacetone phosphate; these read GGS and NIDT.

This sequence belongs to the class II fructose-bisphosphate aldolase family. Homodimer. It depends on Zn(2+) as a cofactor.

The enzyme catalyses beta-D-fructose 1,6-bisphosphate = D-glyceraldehyde 3-phosphate + dihydroxyacetone phosphate. It functions in the pathway carbohydrate degradation; glycolysis; D-glyceraldehyde 3-phosphate and glycerone phosphate from D-glucose: step 4/4. Catalyzes the aldol condensation of dihydroxyacetone phosphate (DHAP or glycerone-phosphate) with glyceraldehyde 3-phosphate (G3P) to form fructose 1,6-bisphosphate (FBP) in gluconeogenesis and the reverse reaction in glycolysis. This chain is Fructose-bisphosphate aldolase (fba), found in Campylobacter jejuni subsp. jejuni serotype O:2 (strain ATCC 700819 / NCTC 11168).